A 540-amino-acid chain; its full sequence is MTRPRPVVLIIMDGWGVAPPGPGNAADLADTPHVDEWMATCPFTTLGASGLDVGLPEGQIGNSEVGHLNIGAGFIVYQELTRISKAIADGDFFTNPAFLQAIEHVKQHNSALHLMGLFGPGGVHAHEDHLHALLELAHRQQVRRVYLHLFLDGRDVLPRSALGFLDTLEGVIARLGVGVIATVSGRYYAMDRDKRWERTGRAYAALVDGIGERATSARAAIEAAYANDISDEFVLPTVIVDAHGTPVATVRDGDAVIFTNFRPDRGRQLTRAFVDPDLNERIRQHYERQKAEGQPLPPQIWQRDRQLHDLCFVTMTQYEEGLPVLVAFPPRYVTTPLAAVISQAGMRQFHIAETEKYPHVTFFLNGGREEPFPGEDRRLIPSPKVATYDLKPEMSAPEVTEALLQAITSDQYDFIVVNYANPDMVGHTGSIPAVIKACEAVDAGLARVVPAILERGGVALVIADHGNAEQMIDPETGGPHTAHTTNPAPCFLIGGPGYGKDTIRLRSGGRLADVAPTLLELLELTPPADMTGQSLIVRNL.

Mn(2+) contacts are provided by Asp13 and Ser63. Ser63 functions as the Phosphoserine intermediate in the catalytic mechanism. Substrate contacts are provided by residues His124, 154–155 (RD), Arg186, Arg192, 262–265 (RPDR), and Lys356. Residues Asp423, His427, Asp464, His465, and His483 each contribute to the Mn(2+) site.

The protein belongs to the BPG-independent phosphoglycerate mutase family. As to quaternary structure, monomer. Mn(2+) serves as cofactor.

It catalyses the reaction (2R)-2-phosphoglycerate = (2R)-3-phosphoglycerate. It functions in the pathway carbohydrate degradation; glycolysis; pyruvate from D-glyceraldehyde 3-phosphate: step 3/5. Its function is as follows. Catalyzes the interconversion of 2-phosphoglycerate and 3-phosphoglycerate. This is 2,3-bisphosphoglycerate-independent phosphoglycerate mutase from Chloroflexus aggregans (strain MD-66 / DSM 9485).